We begin with the raw amino-acid sequence, 854 residues long: Envelope glycoprotein gp160 (854 aa).

A signal peptide spans 1–31 (MKVMEKKKRDWNSLSIITIITIILLTPCLTS). Residues 32-675 (ELWVTVYYGV…ITKWLWYIKI (644 aa)) are Extracellular-facing. Cystine bridges form between C53–C73, C118–C203, C125–C194, C130–C155, C216–C245, and C226–C237. A V1 region spans residues 130 to 154 (CSKANFSQAKNLTNQTSSPPLEMKN). N-linked (GlcNAc...) asparagine; by host glycosylation is found at N134, N140, N143, N154, N158, N186, and N195. The segment at 155–194 (CSFNVTTELRDKKKQVYSLFYVEDVVNLGNENNTYRIINC) is V2. 9 N-linked (GlcNAc...) asparagine; by host glycosylation sites follow: N239, N260, N267, N274, N299, N331, N336, N351, and N356. A V3 region spans residues 294–327 (CHRPGNNTRGEVQIGPGMTFYNIENVVGDTRSAY). A disulfide bridge connects residues C294 and C328. The segment at 362–372 (ASGGDPEVTHH) is CD4-binding loop. 2 cysteine pairs are disulfide-bonded: C376–C429 and C383–C402. The tract at residues 383-402 (CNTSQIFTDNITNGIIILPC) is V4. 6 N-linked (GlcNAc...) asparagine; by host glycosylation sites follow: N384, N392, N426, N432, N446, and N450. V5 stretches follow at residues 445–456 (TNNSGNLTFRPT) and 447–456 (NSGNLTFRPT). Positions 501–522 (AAFGLGALFLGFLGAAGSTMGA) are fusion peptide. The segment at 564–582 (KQLQARLLAVERYLQDQQI) is immunosuppression. The cysteines at positions 588 and 594 are disulfide-linked. N-linked (GlcNAc...) asparagine; by host glycans are attached at residues N601, N608, N616, and N628. The stretch at 624-658 (KLVSNYTGKIFGLLEEAQSQQEKNERDLLELDQWA) forms a coiled coil. Positions 653 to 674 (ELDQWASLWNWFDITKWLWYIK) are MPER; binding to GalCer. The chain crosses the membrane as a helical span at residues 676-696 (FLMAVGGIIGLRIIMTVFSVV). Over 697-854 (RRVRQGYSPL…IRQGLERALL (158 aa)) the chain is Cytoplasmic. A YXXL motif; contains endocytosis signal motif is present at residues 703–706 (YSPL). The Di-leucine internalization motif motif lies at 853–854 (LL).

This sequence belongs to the HIV-1 env protein family. The mature envelope protein (Env) consists of a homotrimer of non-covalently associated gp120-gp41 heterodimers. The resulting complex protrudes from the virus surface as a spike. There seems to be as few as 10 spikes on the average virion. Interacts with host CD4, CCR5 and CXCR4. Gp120 also interacts with the C-type lectins CD209/DC-SIGN and CLEC4M/DC-SIGNR (collectively referred to as DC-SIGN(R)). Gp120 and gp41 interact with GalCer. Gp120 interacts with host ITGA4/ITGB7 complex; on CD4+ T-cells, this interaction results in rapid activation of integrin ITGAL/LFA-1, which facilitates efficient cell-to-cell spreading of HIV-1. Gp120 interacts with cell-associated heparan sulfate; this interaction increases virus infectivity on permissive cells and may be involved in infection of CD4- cells. In terms of assembly, the mature envelope protein (Env) consists of a homotrimer of non-covalently associated gp120-gp41 heterodimers. The resulting complex protrudes from the virus surface as a spike. There seems to be as few as 10 spikes on the average virion. In terms of processing, highly glycosylated by host. The high number of glycan on the protein is reffered to as 'glycan shield' because it contributes to hide protein sequence from adaptive immune system. Palmitoylation of the transmembrane protein and of Env polyprotein (prior to its proteolytic cleavage) is essential for their association with host cell membrane lipid rafts. Palmitoylation is therefore required for envelope trafficking to classical lipid rafts, but not for viral replication. Post-translationally, specific enzymatic cleavages in vivo yield mature proteins. Envelope glycoproteins are synthesized as an inactive precursor that is heavily N-glycosylated and processed likely by host cell furin in the Golgi to yield the mature SU and TM proteins. The cleavage site between SU and TM requires the minimal sequence [KR]-X-[KR]-R. About 2 of the 9 disulfide bonds of gp41 are reduced by P4HB/PDI, following binding to CD4 receptor.

It localises to the virion membrane. The protein resides in the host cell membrane. It is found in the host endosome membrane. Functionally, attaches the virus to the host lymphoid cell by binding to the primary receptor CD4. This interaction induces a structural rearrangement creating a high affinity binding site for a chemokine coreceptor like CXCR4 and/or CCR5. Acts as a ligand for CD209/DC-SIGN and CLEC4M/DC-SIGNR, which are respectively found on dendritic cells (DCs), and on endothelial cells of liver sinusoids and lymph node sinuses. These interactions allow capture of viral particles at mucosal surfaces by these cells and subsequent transmission to permissive cells. HIV subverts the migration properties of dendritic cells to gain access to CD4+ T-cells in lymph nodes. Virus transmission to permissive T-cells occurs either in trans (without DCs infection, through viral capture and transmission), or in cis (following DCs productive infection, through the usual CD4-gp120 interaction), thereby inducing a robust infection. In trans infection, bound virions remain infectious over days and it is proposed that they are not degraded, but protected in non-lysosomal acidic organelles within the DCs close to the cell membrane thus contributing to the viral infectious potential during DCs' migration from the periphery to the lymphoid tissues. On arrival at lymphoid tissues, intact virions recycle back to DCs' cell surface allowing virus transmission to CD4+ T-cells. Acts as a class I viral fusion protein. Under the current model, the protein has at least 3 conformational states: pre-fusion native state, pre-hairpin intermediate state, and post-fusion hairpin state. During fusion of viral and target intracellular membranes, the coiled coil regions (heptad repeats) assume a trimer-of-hairpins structure, positioning the fusion peptide in close proximity to the C-terminal region of the ectodomain. The formation of this structure appears to drive apposition and subsequent fusion of viral and target cell membranes. Complete fusion occurs in host cell endosomes and is dynamin-dependent, however some lipid transfer might occur at the plasma membrane. The virus undergoes clathrin-dependent internalization long before endosomal fusion, thus minimizing the surface exposure of conserved viral epitopes during fusion and reducing the efficacy of inhibitors targeting these epitopes. Membranes fusion leads to delivery of the nucleocapsid into the cytoplasm. In terms of biological role, oligomerizes in the host endoplasmic reticulum into predominantly trimers. In a second time, gp160 transits in the host Golgi, where glycosylation is completed. The precursor is then proteolytically cleaved in the trans-Golgi and thereby activated by cellular furin or furin-like proteases to produce gp120 and gp41. The protein is Envelope glycoprotein gp160 of Pan (chimpanzees).